We begin with the raw amino-acid sequence, 83 residues long: Bublin coiled-coil protein (83 aa).

Residues 1–24 (MSGPNGDLGMPVEAGAEGEEDGFG) form a disordered region. Residues 25–74 (EAEYAAINSMLDQINSCLDHLEEKNDHLHARLQELLESNRQTRLEFQQQL) adopt a coiled-coil conformation. Serine 82 bears the Phosphoserine mark.

It belongs to the UPF0184 (EST00098) family.

The protein localises to the cell junction. The protein resides in the cytoplasm. It localises to the cytoskeleton. In terms of biological role, essential for intermediate filament organization in intestinal cells, interacts with intermediate filament and regulates intestinal lumen morphology. This is Bublin coiled-coil protein from Homo sapiens (Human).